The following is a 417-amino-acid chain: Imidazolonepropionase (417 aa).

Positions 80 and 82 each coordinate Fe(3+). Zn(2+)-binding residues include His80 and His82. 4-imidazolone-5-propanoate contacts are provided by Arg89, Tyr152, and His187. Tyr152 is an N-formimidoyl-L-glutamate binding site. His252 is a binding site for Fe(3+). Residue His252 participates in Zn(2+) binding. Glu255 contacts 4-imidazolone-5-propanoate. Position 326 (Asp326) interacts with Fe(3+). A Zn(2+)-binding site is contributed by Asp326. 2 residues coordinate N-formimidoyl-L-glutamate: Asn328 and Gly330. Ser331 is a binding site for 4-imidazolone-5-propanoate.

Belongs to the metallo-dependent hydrolases superfamily. HutI family. It depends on Zn(2+) as a cofactor. Requires Fe(3+) as cofactor.

It is found in the cytoplasm. The enzyme catalyses 4-imidazolone-5-propanoate + H2O = N-formimidoyl-L-glutamate. Its pathway is amino-acid degradation; L-histidine degradation into L-glutamate; N-formimidoyl-L-glutamate from L-histidine: step 3/3. Its function is as follows. Catalyzes the hydrolytic cleavage of the carbon-nitrogen bond in imidazolone-5-propanoate to yield N-formimidoyl-L-glutamate. It is the third step in the universal histidine degradation pathway. This Bacteroides fragilis (strain YCH46) protein is Imidazolonepropionase.